The following is a 600-amino-acid chain: MTDTPLSLIRNFSIIAHIDHGKSTLADRLIQACGALTAREMKNQVLDSMELEQERGITIKAQTVRLTYPAKDGKVYTLNLMDTPGHVDFAYEVSRSLAACEGSLLVVDASQGVEAQTLANVYQALDANHEIVPVLNKIDLPAAEPERVRAQIEDVVGIPADDAVEISAKTGINIEGVLEALVQRLPAPTGDAEAPLQALLVDSWYDAYLGVIILVRIKDGRLKRGDRIRMMQTGATYHVDQVGVFLPKMQSVESLGPGEMGYINAAIKTVADCNVGDTVTLDKRPAEKALPGFKPSIPVVWCGLFPIDADDFEKLRDSLGKLRLNDASFHFEAETSAALGFGFRCGFLGLLHLEIIQERLSREFNLDLIATAPSVVYKMHMTDGTVEELHNPADMPELSKIEMIEEPWIKATIMVQDEYLGPVLTLCSERRGIQVDLTYVGNRAMAVYRLPLNEVVFDFYDRLKSISRGYASFDYQMDGYEESDLVRISILVNHEPVDALSFISHRTVAEQRGRSICAKLKDLIPKQLFKIAIQAAIGSKVIARETIGALSKDVTAKCYGGDISRKRKLLDKQKEGKKRMRQFGKVEIPQSAFLAALKMD.

Residues serine 7–threonine 189 enclose the tr-type G domain. Residues aspartate 19–threonine 24 and asparagine 136–aspartate 139 each bind GTP.

The protein belongs to the TRAFAC class translation factor GTPase superfamily. Classic translation factor GTPase family. LepA subfamily.

Its subcellular location is the cell inner membrane. The enzyme catalyses GTP + H2O = GDP + phosphate + H(+). Functionally, required for accurate and efficient protein synthesis under certain stress conditions. May act as a fidelity factor of the translation reaction, by catalyzing a one-codon backward translocation of tRNAs on improperly translocated ribosomes. Back-translocation proceeds from a post-translocation (POST) complex to a pre-translocation (PRE) complex, thus giving elongation factor G a second chance to translocate the tRNAs correctly. Binds to ribosomes in a GTP-dependent manner. The chain is Elongation factor 4 from Gluconobacter oxydans (strain 621H) (Gluconobacter suboxydans).